The primary structure comprises 627 residues: Protein fem-1 homolog B (627 aa).

4 ANK repeats span residues Gln-45 to Gln-74, Asp-87 to His-116, Thr-120 to Ile-149, and Tyr-153 to Ala-182. The Zn(2+) site is built by His-185, Cys-186, and His-218. 2 ANK repeats span residues Cys-186 to Val-215 and His-218 to Ser-248. One copy of the TPR repeat lies at Ser-344–Gly-377. ANK repeat units lie at residues Glu-483 to Ala-527 and Glu-531 to Met-568.

The protein belongs to the fem-1 family. Component of a CRL2 E3 ubiquitin-protein ligase complex, also named ECS (Elongin BC-CUL2/5-SOCS-box protein) complex, composed of CUL2, Elongin BC (ELOB and ELOC), RBX1 and substrate-specific adapter FEM1B. Homooligomer. Interacts with PPM1F and PHTF1. Interacts with the death domain of FAS/TNFRSF6 and TNFRSF1A. Interacts with CHEK1. Interacts with NKX3-1. As to expression, present in adult testis (at protein level).

It localises to the cytoplasm. The protein localises to the nucleus. Its pathway is protein modification; protein ubiquitination. Its activity is regulated as follows. Activity of the CRL2(FEM1B) complex toward FNIP1 is inhibited by BEX family proteins (BEX1, BEX2, BEX3 and/or BEX4) in absence of reductive stress. Mechanistically, BEX proteins act as pseudosubstrate inhibitors that associate with FEM1B via zinc in absence of reductive stress, thereby preventing association between FEM1B and FNIP1. In terms of biological role, substrate-recognition component of a Cul2-RING (CRL2) E3 ubiquitin-protein ligase complex of the DesCEND (destruction via C-end degrons) pathway, which recognizes a C-degron located at the extreme C terminus of target proteins, leading to their ubiquitination and degradation. The C-degron recognized by the DesCEND pathway is usually a motif of less than ten residues and can be present in full-length proteins, truncated proteins or proteolytically cleaved forms. The CRL2(FEM1B) complex specifically recognizes proteins ending with -Gly-Leu-Asp-Arg, such as CDK5R1, leading to their ubiquitination and degradation. Also acts as a regulator of the reductive stress response by mediating ubiquitination of reduced FNIP1: in response to reductive stress, the CRL2(FEM1B) complex specifically recognizes a conserved Cys degron in FNIP1 when this degron is reduced, leading to FNIP1 degradation and subsequent activation of mitochondria to recalibrate reactive oxygen species (ROS). Mechanistically, recognizes and binds reduced FNIP1 through two interface zinc ions, which act as a molecular glue that recruit reduced FNIP1 to FEM1B. Promotes ubiquitination of GLI1, suppressing GLI1 transcriptional activator activity. Promotes ubiquitination and degradation of ANKRD37. Promotes ubiquitination and degradation of SLBP. Involved in apoptosis by acting as a death receptor-associated protein that mediates apoptosis. Also involved in glucose homeostasis in pancreatic islet. May also act as an adapter/mediator in replication stress-induced signaling that leads to the activation of CHEK1. The sequence is that of Protein fem-1 homolog B from Rattus norvegicus (Rat).